We begin with the raw amino-acid sequence, 174 residues long: Peptide deformylase (174 aa).

Residues Cys-94 and His-136 each coordinate Fe cation. Glu-137 is an active-site residue. His-140 is a Fe cation binding site.

It belongs to the polypeptide deformylase family. Requires Fe(2+) as cofactor.

The catalysed reaction is N-terminal N-formyl-L-methionyl-[peptide] + H2O = N-terminal L-methionyl-[peptide] + formate. In terms of biological role, removes the formyl group from the N-terminal Met of newly synthesized proteins. Requires at least a dipeptide for an efficient rate of reaction. N-terminal L-methionine is a prerequisite for activity but the enzyme has broad specificity at other positions. The protein is Peptide deformylase of Rhizobium meliloti (strain 1021) (Ensifer meliloti).